A 309-amino-acid polypeptide reads, in one-letter code: Probable manganese-dependent inorganic pyrophosphatase (309 aa).

Residues histidine 9, aspartate 13, aspartate 15, aspartate 75, histidine 97, and aspartate 149 each coordinate Mn(2+).

It belongs to the PPase class C family. Mn(2+) is required as a cofactor.

Its subcellular location is the cytoplasm. It carries out the reaction diphosphate + H2O = 2 phosphate + H(+). The polypeptide is Probable manganese-dependent inorganic pyrophosphatase (Staphylococcus epidermidis (strain ATCC 12228 / FDA PCI 1200)).